A 116-amino-acid chain; its full sequence is Large ribosomal subunit protein uL22 (116 aa).

This sequence belongs to the universal ribosomal protein uL22 family. Part of the 50S ribosomal subunit.

This protein binds specifically to 23S rRNA; its binding is stimulated by other ribosomal proteins, e.g. L4, L17, and L20. It is important during the early stages of 50S assembly. It makes multiple contacts with different domains of the 23S rRNA in the assembled 50S subunit and ribosome. In terms of biological role, the globular domain of the protein is located near the polypeptide exit tunnel on the outside of the subunit, while an extended beta-hairpin is found that lines the wall of the exit tunnel in the center of the 70S ribosome. The sequence is that of Large ribosomal subunit protein uL22 from Sulfurihydrogenibium sp. (strain YO3AOP1).